Here is a 310-residue protein sequence, read N- to C-terminus: Malate dehydrogenase (310 aa).

NAD(+) contacts are provided by residues 7-12 (GAGNVG) and Asp32. Positions 81 and 87 each coordinate substrate. NAD(+) is bound by residues Asn94 and 117–119 (VSN). Substrate-binding residues include Asn119 and Arg150. The Proton acceptor role is filled by His174.

This sequence belongs to the LDH/MDH superfamily. MDH type 3 family.

It carries out the reaction (S)-malate + NAD(+) = oxaloacetate + NADH + H(+). Catalyzes the reversible oxidation of malate to oxaloacetate. This chain is Malate dehydrogenase, found in Chlorobium limicola (strain DSM 245 / NBRC 103803 / 6330).